Reading from the N-terminus, the 732-residue chain is uncharacterized protein (732 aa).

The TR mART core domain occupies 163–390 (YYTINELNYL…FGIVAKKKYE (228 aa)). Active-site residues include R285, S309, and E354.

This is an uncharacterized protein from Acanthamoeba polyphaga mimivirus (APMV).